The primary structure comprises 217 residues: MMAAGPRTSLLLAFTLLCLPWTQVVGAFPAMSLSGLFANAVLRAQHLHQLAADTFKEFERTYIPEGQRYSIQNTQVAFCFSETIPAPTGKNEAQQKSDLELLRISLLLIQSWLGPLQFLSRVFTNSLVFGTSDRVYEKLKDLEEGILALMRELEDVTPRAGQILKQTYDKFDTNMRSDDALLKNYGLLSCFRKDLHKTETYLRVMKCRRFGEASCAF.

Residues 1-27 (MMAAGPRTSLLLAFTLLCLPWTQVVGA) form the signal peptide. His46 contacts Zn(2+). A disulfide bridge links Cys79 with Cys190. Position 132 is a phosphoserine (Ser132). Glu199 contacts Zn(2+). A disulfide bridge links Cys207 with Cys215.

This sequence belongs to the somatotropin/prolactin family.

The protein localises to the secreted. In terms of biological role, plays an important role in growth control. Its major role in stimulating body growth is to stimulate the liver and other tissues to secrete IGF1. It stimulates both the differentiation and proliferation of myoblasts. It also stimulates amino acid uptake and protein synthesis in muscle and other tissues. The sequence is that of Somatotropin (GH1) from Capra hircus (Goat).